A 221-amino-acid polypeptide reads, in one-letter code: GIVVYQSPGDIGQYTHEFDGDEWFYVDLDKKETVWMLPEFGQLTSFDPQGGLQNIATGKHNLGGWTKRSNFTPATNEAPQATVFPKSPVLLGQPNTLICFVDNIFPPVINITWLRNSKSVTDGVYETSFLVNRDHSFHKLSYLTFIPSDDDIYDCKVEHWGLDEPVLKHWEPEIPAPMSELTETVVCALGLSVGLVGIVVGTIFIIQGLRSGGTSRPPGPL.

The interval G1–N76 is alpha-1. At G1 to E183 the chain is on the extracellular side. The segment at E77 to W170 is alpha-2. Positions P79–E171 constitute an Ig-like C1-type domain. A disulfide bond links C99 and C155. A glycan (N-linked (GlcNAc...) asparagine) is linked at N110. The segment at E171–E183 is connecting peptide. Residues T184 to L209 traverse the membrane as a helical segment. Residues R210 to L221 are Cytoplasmic-facing.

This sequence belongs to the MHC class II family.

The protein localises to the membrane. The chain is H-2 class II histocompatibility antigen, A-Q alpha chain (H2-Aa) from Mus musculus (Mouse).